The chain runs to 547 residues: Chaperonin GroEL (547 aa).

Residues 30 to 33, lysine 51, 87 to 91, glycine 415, and aspartate 496 contribute to the ATP site; these read TLGP and DGTTT. Residues 527 to 547 are disordered; sequence SDKEEPMPMRGGMGGMGGMDF. The span at 537 to 547 shows a compositional bias: gly residues; sequence GGMGGMGGMDF.

Belongs to the chaperonin (HSP60) family. In terms of assembly, forms a cylinder of 14 subunits composed of two heptameric rings stacked back-to-back. Interacts with the co-chaperonin GroES.

Its subcellular location is the cytoplasm. It catalyses the reaction ATP + H2O + a folded polypeptide = ADP + phosphate + an unfolded polypeptide.. In terms of biological role, together with its co-chaperonin GroES, plays an essential role in assisting protein folding. The GroEL-GroES system forms a nano-cage that allows encapsulation of the non-native substrate proteins and provides a physical environment optimized to promote and accelerate protein folding. The polypeptide is Chaperonin GroEL (Rickettsia massiliae (strain Mtu5)).